A 145-amino-acid chain; its full sequence is Large ribosomal subunit protein uL13 (145 aa).

Belongs to the universal ribosomal protein uL13 family. As to quaternary structure, part of the 50S ribosomal subunit.

This protein is one of the early assembly proteins of the 50S ribosomal subunit, although it is not seen to bind rRNA by itself. It is important during the early stages of 50S assembly. In Geobacillus thermodenitrificans (strain NG80-2), this protein is Large ribosomal subunit protein uL13.